A 145-amino-acid chain; its full sequence is D-aminoacyl-tRNA deacylase (145 aa).

The Gly-cisPro motif, important for rejection of L-amino acids motif lies at 137–138 (GP).

The protein belongs to the DTD family. In terms of assembly, homodimer.

It is found in the cytoplasm. It catalyses the reaction glycyl-tRNA(Ala) + H2O = tRNA(Ala) + glycine + H(+). The catalysed reaction is a D-aminoacyl-tRNA + H2O = a tRNA + a D-alpha-amino acid + H(+). In terms of biological role, an aminoacyl-tRNA editing enzyme that deacylates mischarged D-aminoacyl-tRNAs. Also deacylates mischarged glycyl-tRNA(Ala), protecting cells against glycine mischarging by AlaRS. Acts via tRNA-based rather than protein-based catalysis; rejects L-amino acids rather than detecting D-amino acids in the active site. By recycling D-aminoacyl-tRNA to D-amino acids and free tRNA molecules, this enzyme counteracts the toxicity associated with the formation of D-aminoacyl-tRNA entities in vivo and helps enforce protein L-homochirality. The polypeptide is D-aminoacyl-tRNA deacylase (Idiomarina loihiensis (strain ATCC BAA-735 / DSM 15497 / L2-TR)).